We begin with the raw amino-acid sequence, 264 residues long: Cyclin-P1-1 (264 aa).

Residues 1-25 (MDAAAAAGGEMSRQKATASAPPPPE) form a disordered region.

This sequence belongs to the cyclin family. Cyclin U/P subfamily.

The protein is Cyclin-P1-1 (CYCP1-1) of Oryza sativa subsp. japonica (Rice).